The primary structure comprises 242 residues: Mannosyl-3-phosphoglycerate phosphatase (242 aa).

Residue aspartate 8 is the Nucleophile of the active site. Mg(2+)-binding residues include aspartate 8, aspartate 10, serine 169, and aspartate 204.

Belongs to the HAD-like hydrolase superfamily. MPGP family. Mg(2+) serves as cofactor.

It is found in the cytoplasm. It catalyses the reaction 2-O-(alpha-D-mannosyl)-3-phosphoglycerate + H2O = (2R)-2-O-(alpha-D-mannosyl)-glycerate + phosphate. It participates in carbohydrate biosynthesis; 2-(alpha-D-mannosyl)-D-glycerate biosynthesis; 2-(alpha-D-mannosyl)-D-glycerate from GDP-alpha-D-mannose (MPG route): step 2/2. In terms of biological role, hydrolyzes mannosyl-3-phosphoglycerate (MPG) to form the osmolyte mannosylglycerate (MG). In Pyrococcus furiosus (strain ATCC 43587 / DSM 3638 / JCM 8422 / Vc1), this protein is Mannosyl-3-phosphoglycerate phosphatase.